Here is a 337-residue protein sequence, read N- to C-terminus: Arylacetonitrilase (337 aa).

A CN hydrolase domain is found at 7-278 (VRVAVTQHEP…EGFVYADLDL (272 aa)). Glu47 (proton acceptor) is an active-site residue. Residue Lys127 is part of the active site. Cys162 functions as the Nucleophile in the catalytic mechanism. Residues 311–337 (QHRPEGQADNAAYGLDVPSGLVEEEGA) are disordered.

This sequence belongs to the carbon-nitrogen hydrolase superfamily. Nitrilase family.

It catalyses the reaction a nitrile + 2 H2O = a carboxylate + NH4(+). The enzyme catalyses 4-chlorophenylacetonitrile + 2 H2O = 4-chlorophenylacetate + NH4(+). In terms of biological role, nitrilase that hydrolyzes preferentially phenylacetonitrile, but also (R,S)-mandelonitrile, and 2-phenylpropionitrile. The polypeptide is Arylacetonitrilase (Aspergillus niger (strain ATCC MYA-4892 / CBS 513.88 / FGSC A1513)).